The sequence spans 213 residues: BAG family molecular chaperone regulator 6, mitochondrial (213 aa).

Positions 53 to 82 (DDAAAARIQAAFRGHLVRRHAAAVRGADDE) constitute an IQ domain. The BAG domain maps to 75–152 (AVRGADDEAT…GLQEVFDAVL (78 aa)).

Interacts with CAM1-1 under normal conditions. Dissociation of the interaction when calcium-CAM1-1 binding increases under saline-alkaline stress.

The protein resides in the mitochondrion. Functionally, co-chaperone that regulates stress responses. Acts as a negative regulator of saline-alkaline stress tolerance. May participate in stress response through regulating the homeostasis of iron, manganese and zinc ions. The sequence is that of BAG family molecular chaperone regulator 6, mitochondrial from Oryza sativa subsp. japonica (Rice).